The sequence spans 146 residues: Large ribosomal subunit protein uL15x (146 aa).

2 stretches are compositionally biased toward basic residues: residues Met-1–His-14 and Arg-21–Gly-30. The interval Met-1–Ala-35 is disordered.

Belongs to the universal ribosomal protein uL15 family.

The polypeptide is Large ribosomal subunit protein uL15x (RPL27AC) (Arabidopsis thaliana (Mouse-ear cress)).